The sequence spans 280 residues: 4-diphosphocytidyl-2-C-methyl-D-erythritol kinase (280 aa).

The active site involves Lys-8. 91 to 101 (PVAAGLAGGSS) lines the ATP pocket. Asp-133 is a catalytic residue.

It belongs to the GHMP kinase family. IspE subfamily.

The catalysed reaction is 4-CDP-2-C-methyl-D-erythritol + ATP = 4-CDP-2-C-methyl-D-erythritol 2-phosphate + ADP + H(+). It functions in the pathway isoprenoid biosynthesis; isopentenyl diphosphate biosynthesis via DXP pathway; isopentenyl diphosphate from 1-deoxy-D-xylulose 5-phosphate: step 3/6. In terms of biological role, catalyzes the phosphorylation of the position 2 hydroxy group of 4-diphosphocytidyl-2C-methyl-D-erythritol. In Clostridium kluyveri (strain NBRC 12016), this protein is 4-diphosphocytidyl-2-C-methyl-D-erythritol kinase.